The chain runs to 316 residues: Beta-ketoacyl-[acyl-carrier-protein] synthase III (316 aa).

Active-site residues include C112 and H243. Residues 244–248 are ACP-binding; that stretch reads QANLR. N273 is a catalytic residue.

This sequence belongs to the thiolase-like superfamily. FabH family. Homodimer.

The protein localises to the cytoplasm. The catalysed reaction is malonyl-[ACP] + acetyl-CoA + H(+) = 3-oxobutanoyl-[ACP] + CO2 + CoA. It functions in the pathway lipid metabolism; fatty acid biosynthesis. Its function is as follows. Catalyzes the condensation reaction of fatty acid synthesis by the addition to an acyl acceptor of two carbons from malonyl-ACP. Catalyzes the first condensation reaction which initiates fatty acid synthesis and may therefore play a role in governing the total rate of fatty acid production. Possesses both acetoacetyl-ACP synthase and acetyl transacylase activities. Its substrate specificity determines the biosynthesis of branched-chain and/or straight-chain of fatty acids. The chain is Beta-ketoacyl-[acyl-carrier-protein] synthase III from Histophilus somni (strain 2336) (Haemophilus somnus).